We begin with the raw amino-acid sequence, 383 residues long: Putative gustatory receptor 22c (383 aa).

Residues 1-11 (MFASRSDLQSR) are Cytoplasmic-facing. Residues 12–32 (LCWIILKATLYSSWFLGVFPY) traverse the membrane as a helical segment. Topologically, residues 33–45 (RFDSRNGQLKRSR) are extracellular. A helical transmembrane segment spans residues 46–66 (FLLFYGLILNFFLLLKMVCSG). Residues 67–86 (GQKLGIPEAFARNSVLENTH) lie on the Cytoplasmic side of the membrane. The chain crosses the membrane as a helical span at residues 87–107 (YTTGMLAVFSCVVIHFLNFWG). Over 108–144 (STRVQDLANELLVLEYQQFASLNETKCPKFNSFVIQK) the chain is Extracellular. N-linked (GlcNAc...) asparagine glycosylation is present at N130. Residues 145–165 (WLSVIGLLLSYLSIAYGLPGN) traverse the membrane as a helical segment. At 166–250 (NFSVEMVLIN…YMVATYEYHM (85 aa)) the chain is on the cytoplasmic side. Residues 251-271 (TLVLTTGLASNFLAIYSWIVL) form a helical membrane-spanning segment. The Extracellular portion of the chain corresponds to 272–279 (DISMNINF). Residues 280–300 (IYLLIFPLFLLVNVWNLWLSI) form a helical membrane-spanning segment. Residues 301-360 (AASDLAENAGKSTQTVLKLFADLEVKDIELERSVNEFALLCGHCQFNFHVCGLFTINYKM) lie on the Cytoplasmic side of the membrane. A helical transmembrane segment spans residues 361–381 (GFQMIITSFLYLIYMIQFDFM). The Extracellular portion of the chain corresponds to 382-383 (NL).

Belongs to the insect chemoreceptor superfamily. Gustatory receptor (GR) family. Gr22e subfamily. In terms of tissue distribution, taste bristles in the foreleg and labial palps.

The protein localises to the cell membrane. Functionally, probable gustatory receptor which mediates acceptance or avoidance behavior, depending on its substrates. The chain is Putative gustatory receptor 22c (Gr22c) from Drosophila melanogaster (Fruit fly).